The primary structure comprises 121 residues: Flagellar protein FliT (121 aa).

The segment at 1-50 (MNNAPHLYFAWQQLVEKSQLMLRLATEEQWDELIASEMAYVNAVQEIAHL) is required for homodimerization. The tract at residues 60–98 (MQEQLRPMLRLILDNESKVKQLLQIRMDELAKLVGQSSV) is fliD binding.

This sequence belongs to the FliT family. Homodimer. Interacts with FliD and FlhC.

It is found in the cytoplasm. The protein localises to the cytosol. Functionally, dual-function protein that regulates the transcription of class 2 flagellar operons and that also acts as an export chaperone for the filament-capping protein FliD. As a transcriptional regulator, acts as an anti-FlhDC factor; it directly binds FlhC, thus inhibiting the binding of the FlhC/FlhD complex to class 2 promoters, resulting in decreased expression of class 2 flagellar operons. As a chaperone, effects FliD transition to the membrane by preventing its premature polymerization, and by directing it to the export apparatus. The polypeptide is Flagellar protein FliT (Escherichia coli O9:H4 (strain HS)).